The chain runs to 515 residues: Hyccin (515 aa).

Positions 358–378 (STSQSALSNSSNTSSKNLLGK) are enriched in low complexity. Disordered stretches follow at residues 358-410 (STSQ…TQRA) and 491-515 (TDLP…LSTD). Residues 389-403 (AGREKEGETCREHLS) are compositionally biased toward basic and acidic residues. The segment covering 498–515 (KQPNQQRPPSISITLSTD) has biased composition (polar residues).

It belongs to the Hyccin family. As to quaternary structure, component of a phosphatidylinositol 4-kinase (PI4K) complex.

The protein localises to the cytoplasm. It is found in the cytosol. Its subcellular location is the cell membrane. Functionally, component of a complex required to localize phosphatidylinositol 4-kinase (PI4K) to the plasma membrane. The complex acts as a regulator of phosphatidylinositol 4-phosphate (PtdIns(4)P) synthesis. This Gallus gallus (Chicken) protein is Hyccin (HYCC1).